A 232-amino-acid polypeptide reads, in one-letter code: Large ribosomal subunit protein uL1 (232 aa).

The protein belongs to the universal ribosomal protein uL1 family. As to quaternary structure, part of the 50S ribosomal subunit.

In terms of biological role, binds directly to 23S rRNA. The L1 stalk is quite mobile in the ribosome, and is involved in E site tRNA release. Its function is as follows. Protein L1 is also a translational repressor protein, it controls the translation of the L11 operon by binding to its mRNA. In Xanthomonas campestris pv. campestris (strain B100), this protein is Large ribosomal subunit protein uL1.